The primary structure comprises 368 residues: E3 ubiquitin-protein ligase makorin (368 aa).

2 C3H1-type zinc fingers span residues 2–29 and 30–57; these read STKR…HDWN and DQPN…HVKV. The tract at residues 58–81 is disordered; sequence SRNPTVAPPPSSSTTTRASSSLQP. A compositionally biased stretch (low complexity) spans 69–78; it reads SSTTTRASSS. The segment at 147–174 adopts a C3H1-type 3 zinc-finger fold; the sequence is PADLPICSFAAGGNCPYGEECPQMHGDL. The interval 175–202 is makorin-type Cys-His; it reads CTTCGKMCLHPYRPDEREEHTKLCEKNH. The RING-type zinc-finger motif lies at 216 to 274; the sequence is CSVCLDRVLSKPTAAERKFGLLSECDHPFCISCIRNWRNNSPTSGMDVNSALRACPICR. Residues 303–332 form a C3H1-type 4 zinc finger; sequence KLKSIDCKYFDFGTGTCPFGSSCFYKHAYR.

Expressed in primary roots and leaves. Detected in vascular bundle tissues.

The catalysed reaction is S-ubiquitinyl-[E2 ubiquitin-conjugating enzyme]-L-cysteine + [acceptor protein]-L-lysine = [E2 ubiquitin-conjugating enzyme]-L-cysteine + N(6)-ubiquitinyl-[acceptor protein]-L-lysine.. It participates in protein modification; protein ubiquitination. E3 ubiquitin ligase catalyzing the covalent attachment of ubiquitin moieties onto substrate proteins. The protein is E3 ubiquitin-protein ligase makorin (MKRN) of Oryza sativa subsp. japonica (Rice).